A 140-amino-acid chain; its full sequence is UPF0132 membrane protein MJ1527 (140 aa).

3 helical membrane-spanning segments follow: residues 40–60, 70–90, and 92–112; these read MEGV…LLLE, AMQS…VSAI, and IIGW…WIVG.

This sequence belongs to the UPF0132 family.

The protein localises to the cell membrane. The sequence is that of UPF0132 membrane protein MJ1527 from Methanocaldococcus jannaschii (strain ATCC 43067 / DSM 2661 / JAL-1 / JCM 10045 / NBRC 100440) (Methanococcus jannaschii).